A 351-amino-acid chain; its full sequence is Nicotinate-nucleotide--dimethylbenzimidazole phosphoribosyltransferase (351 aa).

E317 (proton acceptor) is an active-site residue.

It belongs to the CobT family.

It catalyses the reaction 5,6-dimethylbenzimidazole + nicotinate beta-D-ribonucleotide = alpha-ribazole 5'-phosphate + nicotinate + H(+). It participates in nucleoside biosynthesis; alpha-ribazole biosynthesis; alpha-ribazole from 5,6-dimethylbenzimidazole: step 1/2. Catalyzes the synthesis of alpha-ribazole-5'-phosphate from nicotinate mononucleotide (NAMN) and 5,6-dimethylbenzimidazole (DMB). This is Nicotinate-nucleotide--dimethylbenzimidazole phosphoribosyltransferase from Bradyrhizobium sp. (strain BTAi1 / ATCC BAA-1182).